A 349-amino-acid chain; its full sequence is Glycosyltransferase 8 domain-containing protein 2 (349 aa).

The Cytoplasmic segment spans residues Met-1–Lys-6. Residues Ile-7–Tyr-24 form a helical; Signal-anchor for type II membrane protein membrane-spanning segment. The Lumenal segment spans residues Lys-25–Ser-349. Asn-234 carries N-linked (GlcNAc...) asparagine glycosylation.

It belongs to the glycosyltransferase 8 family.

It is found in the membrane. The polypeptide is Glycosyltransferase 8 domain-containing protein 2 (GLT8D2) (Homo sapiens (Human)).